The sequence spans 414 residues: 3-aminobutyryl-CoA aminotransferase (414 aa).

N6-(pyridoxal phosphate)lysine is present on Lys-261.

It belongs to the class-III pyridoxal-phosphate-dependent aminotransferase family. As to quaternary structure, homodimer. Pyridoxal 5'-phosphate is required as a cofactor.

It catalyses the reaction (3S)-3-aminobutanoyl-CoA + 2-oxoglutarate = acetoacetyl-CoA + L-glutamate. It participates in amino-acid degradation; L-lysine degradation via acetate pathway. 3-aminobutyryl-CoA aminotransferase that acts specifically on coenzyme A (CoA) esters and catalyzes the conversion of 3-aminobutyryl-CoA into acetoacetyl-CoA in an alternative pathway of lysine fermentation. The sequence is that of 3-aminobutyryl-CoA aminotransferase (kat) from Cloacimonas acidaminovorans (strain Evry).